We begin with the raw amino-acid sequence, 1264 residues long: Valine--tRNA ligase (1264 aa).

The residue at position 2 (Ser2) is an N-acetylserine. Residues Gly89–Gln219 enclose the GST C-terminal domain. The segment covering Gln218–Thr230 has biased composition (polar residues). The interval Gln218–Met296 is disordered. Composition is skewed to basic and acidic residues over residues Leu234–Gln248 and His260–Pro275. The short motif at Pro344–His354 is the 'HIGH' region element. Phosphoserine is present on residues Ser437 and Ser527. The residue at position 645 (Lys645) is an N6-acetyllysine. Positions Lys862–Ser866 match the 'KMSKS' region motif. Lys865 contributes to the ATP binding site.

This sequence belongs to the class-I aminoacyl-tRNA synthetase family. Forms high-molecular-mass aggregates with elongation factor 1.

It catalyses the reaction tRNA(Val) + L-valine + ATP = L-valyl-tRNA(Val) + AMP + diphosphate. Its activity is regulated as follows. Can be regulated by protein kinase C-dependent phosphorylation. The sequence is that of Valine--tRNA ligase (Vars1) from Rattus norvegicus (Rat).